We begin with the raw amino-acid sequence, 139 residues long: Nucleoside diphosphate kinase (139 aa).

ATP-binding residues include K9, F57, R85, T91, R102, and N112. H115 serves as the catalytic Pros-phosphohistidine intermediate.

Belongs to the NDK family. In terms of assembly, homotetramer. Mg(2+) serves as cofactor.

The protein resides in the cytoplasm. It carries out the reaction a 2'-deoxyribonucleoside 5'-diphosphate + ATP = a 2'-deoxyribonucleoside 5'-triphosphate + ADP. The catalysed reaction is a ribonucleoside 5'-diphosphate + ATP = a ribonucleoside 5'-triphosphate + ADP. Functionally, major role in the synthesis of nucleoside triphosphates other than ATP. The ATP gamma phosphate is transferred to the NDP beta phosphate via a ping-pong mechanism, using a phosphorylated active-site intermediate. The sequence is that of Nucleoside diphosphate kinase from Neorickettsia sennetsu (strain ATCC VR-367 / Miyayama) (Ehrlichia sennetsu).